The chain runs to 103 residues: Sperm-associated antigen 11B (103 aa).

The signal sequence occupies residues 1 to 25 (MRQRLLPSVTSLLLVALLFPGSSQA). N-linked (GlcNAc...) asparagine glycosylation occurs at Asn-29.

This sequence belongs to the SPAG11 family. Specifically expressed in caput and proximal corpus of epididymis (at protein level). Present in the epididymal epithelium and on the sperm surface, with a subacrosomal equatorial distribution on the sperm head (at protein level).

Its subcellular location is the secreted. Its function is as follows. Has antimicrobial activity against E.coli. Plays a role in the defense response in the male reproductive tract, contributing to sperm maturation, storage and protection. In Homo sapiens (Human), this protein is Sperm-associated antigen 11B.